A 532-amino-acid polypeptide reads, in one-letter code: FRIGIDA-like protein 4a (532 aa).

Residues 406–432 (KTEKRKPAAVPANKRTRASYNGPMPPA) form a disordered region.

This sequence belongs to the Frigida family. As to expression, expressed in leaves, shoot apex, flowers and during seed development.

This chain is FRIGIDA-like protein 4a (FRL4A), found in Arabidopsis thaliana (Mouse-ear cress).